The following is a 384-amino-acid chain: Na(+)/H(+) antiporter NhaA (384 aa).

11 helical membrane passes run 7–27 (FYNLETIGGILLFIAAVLAII), 58–78 (LLLWINDGLMAIYFLLIGLEI), 94–114 (LVPALTALAGLLFPALIFIFF), 124–144 (GWAIPTATDIAFTLGIVSLLG), 153–173 (ILLTAIAIFDDIAAIVIIALF), 179–199 (SLLSLSLALVFTLILIGLNYF), 204–224 (ISVFMLFGVALWIAVLKSGVH), 256–276 (VVFLILPLFAFANAGVSFVGL), 285–305 (VVLGIGLGLFLGKQLGIFLSL), 325–345 (VYGIALICGVGFTMSLFIGSL), and 357–377 (MVKIGVVFGSFIAGLTGFLVL).

It belongs to the NhaA Na(+)/H(+) (TC 2.A.33) antiporter family.

It is found in the cell inner membrane. The catalysed reaction is Na(+)(in) + 2 H(+)(out) = Na(+)(out) + 2 H(+)(in). Functionally, na(+)/H(+) antiporter that extrudes sodium in exchange for external protons. This is Na(+)/H(+) antiporter NhaA from Legionella pneumophila (strain Corby).